Here is a 522-residue protein sequence, read N- to C-terminus: Cytochrome P450 1A1 (522 aa).

Phe-229 is a substrate binding site. A heme-binding site is contributed by Cys-463.

Belongs to the cytochrome P450 family. Heme serves as cofactor. As to expression, liver.

It localises to the endoplasmic reticulum membrane. Its subcellular location is the microsome membrane. The enzyme catalyses an organic molecule + reduced [NADPH--hemoprotein reductase] + O2 = an alcohol + oxidized [NADPH--hemoprotein reductase] + H2O + H(+). In terms of biological role, cytochromes P450 are a group of heme-thiolate monooxygenases. They oxidize a variety of structurally unrelated compounds, including steroids, fatty acids, and xenobiotics. This chain is Cytochrome P450 1A1 (cyp1a1), found in Oncorhynchus mykiss (Rainbow trout).